The following is a 199-amino-acid chain: Superoxide dismutase [Mn/Fe] 2 (199 aa).

Residues H27, H81, D161, and H165 each coordinate Fe(3+). Mn(2+) is bound by residues H27, H81, D161, and H165.

This sequence belongs to the iron/manganese superoxide dismutase family. As to quaternary structure, homodimer. Can also form a heterodimer with SodA. Requires Mn(2+) as cofactor. Fe(3+) is required as a cofactor.

It carries out the reaction 2 superoxide + 2 H(+) = H2O2 + O2. Destroys superoxide anion radicals which are normally produced within the cells and which are toxic to biological systems. Catalyzes the dismutation of superoxide anion radicals into O2 and H2O2 by successive reduction and oxidation of the transition metal ion at the active site. The polypeptide is Superoxide dismutase [Mn/Fe] 2 (sodM) (Staphylococcus aureus (strain USA300)).